The sequence spans 59 residues: MVSTLMIASVKLRLYCTALIILCNQKNPSEFNVLIHKLIIKWGFMNKNFHFVSVFFIKF.

A signal peptide spans 1-18 (MVSTLMIASVKLRLYCTA).

It belongs to the non-disulfide-bridged peptide (NDBP) superfamily. Long chain multifunctional peptide (group 2) family. As to expression, expressed by the venom gland.

It localises to the secreted. This chain is Venom protein 37.1, found in Lychas mucronatus (Chinese swimming scorpion).